Here is a 316-residue protein sequence, read N- to C-terminus: DNA-directed RNA polymerase subunit alpha (316 aa).

An alpha N-terminal domain (alpha-NTD) region spans residues 1 to 230 (MIEFEKPNIH…EHLAMFVDLT (230 aa)). The interval 247–316 (KEKMLEMTIE…DLGLSLRKED (70 aa)) is alpha C-terminal domain (alpha-CTD).

Belongs to the RNA polymerase alpha chain family. As to quaternary structure, homodimer. The RNAP catalytic core consists of 2 alpha, 1 beta, 1 beta' and 1 omega subunit. When a sigma factor is associated with the core the holoenzyme is formed, which can initiate transcription.

It carries out the reaction RNA(n) + a ribonucleoside 5'-triphosphate = RNA(n+1) + diphosphate. Its function is as follows. DNA-dependent RNA polymerase catalyzes the transcription of DNA into RNA using the four ribonucleoside triphosphates as substrates. This is DNA-directed RNA polymerase subunit alpha from Levilactobacillus brevis (strain ATCC 367 / BCRC 12310 / CIP 105137 / JCM 1170 / LMG 11437 / NCIMB 947 / NCTC 947) (Lactobacillus brevis).